The chain runs to 138 residues: UPF0251 protein Dole_1957 (138 aa).

The protein belongs to the UPF0251 family.

This is UPF0251 protein Dole_1957 from Desulfosudis oleivorans (strain DSM 6200 / JCM 39069 / Hxd3) (Desulfococcus oleovorans).